A 155-amino-acid polypeptide reads, in one-letter code: 6,7-dimethyl-8-ribityllumazine synthase (155 aa).

Residues Phe-23, 57–59 (AFE), and 81–83 (AVI) contribute to the 5-amino-6-(D-ribitylamino)uracil site. 86 to 87 (ST) provides a ligand contact to (2S)-2-hydroxy-3-oxobutyl phosphate. His-89 acts as the Proton donor in catalysis. Phe-114 lines the 5-amino-6-(D-ribitylamino)uracil pocket. Residue Arg-128 participates in (2S)-2-hydroxy-3-oxobutyl phosphate binding.

This sequence belongs to the DMRL synthase family.

It catalyses the reaction (2S)-2-hydroxy-3-oxobutyl phosphate + 5-amino-6-(D-ribitylamino)uracil = 6,7-dimethyl-8-(1-D-ribityl)lumazine + phosphate + 2 H2O + H(+). It participates in cofactor biosynthesis; riboflavin biosynthesis; riboflavin from 2-hydroxy-3-oxobutyl phosphate and 5-amino-6-(D-ribitylamino)uracil: step 1/2. Catalyzes the formation of 6,7-dimethyl-8-ribityllumazine by condensation of 5-amino-6-(D-ribitylamino)uracil with 3,4-dihydroxy-2-butanone 4-phosphate. This is the penultimate step in the biosynthesis of riboflavin. This is 6,7-dimethyl-8-ribityllumazine synthase from Geobacter metallireducens (strain ATCC 53774 / DSM 7210 / GS-15).